A 230-amino-acid chain; its full sequence is tRNA (guanine-N(1)-)-methyltransferase (230 aa).

S-adenosyl-L-methionine-binding positions include Gly-114 and 138 to 143 (IGDYVL).

Belongs to the RNA methyltransferase TrmD family. As to quaternary structure, homodimer.

It is found in the cytoplasm. It catalyses the reaction guanosine(37) in tRNA + S-adenosyl-L-methionine = N(1)-methylguanosine(37) in tRNA + S-adenosyl-L-homocysteine + H(+). In terms of biological role, specifically methylates guanosine-37 in various tRNAs. The sequence is that of tRNA (guanine-N(1)-)-methyltransferase from Rhodococcus jostii (strain RHA1).